The chain runs to 184 residues: ATP synthase subunit b, chloroplastic (184 aa).

A helical transmembrane segment spans residues 27–49 (LATNPINLSVVLGVLIFFGKGVL).

The protein belongs to the ATPase B chain family. As to quaternary structure, F-type ATPases have 2 components, F(1) - the catalytic core - and F(0) - the membrane proton channel. F(1) has five subunits: alpha(3), beta(3), gamma(1), delta(1), epsilon(1). F(0) has four main subunits: a(1), b(1), b'(1) and c(10-14). The alpha and beta chains form an alternating ring which encloses part of the gamma chain. F(1) is attached to F(0) by a central stalk formed by the gamma and epsilon chains, while a peripheral stalk is formed by the delta, b and b' chains.

The protein resides in the plastid. It is found in the chloroplast thylakoid membrane. Functionally, f(1)F(0) ATP synthase produces ATP from ADP in the presence of a proton or sodium gradient. F-type ATPases consist of two structural domains, F(1) containing the extramembraneous catalytic core and F(0) containing the membrane proton channel, linked together by a central stalk and a peripheral stalk. During catalysis, ATP synthesis in the catalytic domain of F(1) is coupled via a rotary mechanism of the central stalk subunits to proton translocation. In terms of biological role, component of the F(0) channel, it forms part of the peripheral stalk, linking F(1) to F(0). This chain is ATP synthase subunit b, chloroplastic, found in Citrus sinensis (Sweet orange).